The sequence spans 263 residues: N-acyl homoserine lactonase AttM (263 aa).

Residues H103, H105, D107, H108, H180, D202, and H247 each coordinate Zn(2+).

Belongs to the metallo-beta-lactamase superfamily. Zn(2+) is required as a cofactor.

It catalyses the reaction an N-acyl-L-homoserine lactone + H2O = an N-acyl-L-homoserine + H(+). This chain is N-acyl homoserine lactonase AttM, found in Rhizobium johnstonii (strain DSM 114642 / LMG 32736 / 3841) (Rhizobium leguminosarum bv. viciae).